Reading from the N-terminus, the 195-residue chain is ATP synthase subunit b (195 aa).

A helical transmembrane segment spans residues 28 to 48 (IFPNVYVLIAHVISLIFLLLL).

The protein belongs to the ATPase B chain family. In terms of assembly, F-type ATPases have 2 components, F(1) - the catalytic core - and F(0) - the membrane proton channel. F(1) has five subunits: alpha(3), beta(3), gamma(1), delta(1), epsilon(1). F(0) has three main subunits: a(1), b(2) and c(10-14). The alpha and beta chains form an alternating ring which encloses part of the gamma chain. F(1) is attached to F(0) by a central stalk formed by the gamma and epsilon chains, while a peripheral stalk is formed by the delta and b chains.

It is found in the cell membrane. F(1)F(0) ATP synthase produces ATP from ADP in the presence of a proton or sodium gradient. F-type ATPases consist of two structural domains, F(1) containing the extramembraneous catalytic core and F(0) containing the membrane proton channel, linked together by a central stalk and a peripheral stalk. During catalysis, ATP synthesis in the catalytic domain of F(1) is coupled via a rotary mechanism of the central stalk subunits to proton translocation. In terms of biological role, component of the F(0) channel, it forms part of the peripheral stalk, linking F(1) to F(0). In Malacoplasma penetrans (strain HF-2) (Mycoplasma penetrans), this protein is ATP synthase subunit b.